Consider the following 388-residue polypeptide: Succinate--CoA ligase [ADP-forming] subunit beta (388 aa).

Positions K9–H244 constitute an ATP-grasp domain. ATP is bound by residues K46, G53–G55, E99, T102, and E107. Mg(2+) contacts are provided by N199 and D213. Residues N264 and G321–V323 contribute to the substrate site.

It belongs to the succinate/malate CoA ligase beta subunit family. Heterotetramer of two alpha and two beta subunits. The cofactor is Mg(2+).

It catalyses the reaction succinate + ATP + CoA = succinyl-CoA + ADP + phosphate. The enzyme catalyses GTP + succinate + CoA = succinyl-CoA + GDP + phosphate. It functions in the pathway carbohydrate metabolism; tricarboxylic acid cycle; succinate from succinyl-CoA (ligase route): step 1/1. Its function is as follows. Succinyl-CoA synthetase functions in the citric acid cycle (TCA), coupling the hydrolysis of succinyl-CoA to the synthesis of either ATP or GTP and thus represents the only step of substrate-level phosphorylation in the TCA. The beta subunit provides nucleotide specificity of the enzyme and binds the substrate succinate, while the binding sites for coenzyme A and phosphate are found in the alpha subunit. The chain is Succinate--CoA ligase [ADP-forming] subunit beta from Pseudomonas aeruginosa (strain LESB58).